A 376-amino-acid chain; its full sequence is 23S rRNA (uracil(747)-C(5))-methyltransferase RlmC (376 aa).

Positions 3, 11, 14, and 87 each coordinate [4Fe-4S] cluster. Residues Q212, F241, E262, and N307 each contribute to the S-adenosyl-L-methionine site. C334 acts as the Nucleophile in catalysis.

Belongs to the class I-like SAM-binding methyltransferase superfamily. RNA M5U methyltransferase family. RlmC subfamily.

It carries out the reaction uridine(747) in 23S rRNA + S-adenosyl-L-methionine = 5-methyluridine(747) in 23S rRNA + S-adenosyl-L-homocysteine + H(+). In terms of biological role, catalyzes the formation of 5-methyl-uridine at position 747 (m5U747) in 23S rRNA. This chain is 23S rRNA (uracil(747)-C(5))-methyltransferase RlmC, found in Yersinia pseudotuberculosis serotype O:1b (strain IP 31758).